Reading from the N-terminus, the 384-residue chain is Glycerol 3-phosphate oxidase (384 aa).

The signal sequence occupies residues 1–17 (MQTIDVLIVGGGVIGTS). Isoleucine 14 lines the FAD pocket. Cysteine 18 carries N-palmitoyl cysteine lipidation. Cysteine 18 carries S-diacylglycerol cysteine lipidation. FAD-binding positions include glutamate 33, 42-43 (TS), and 47-49 (SGV). Positions 47 and 51 each coordinate sn-glycerol 3-phosphate. The active-site Proton acceptor is the histidine 51. Valine 177 contributes to the FAD binding site. Lysine 258 and arginine 320 together coordinate sn-glycerol 3-phosphate. 346-347 (MK) contributes to the FAD binding site. Serine 348 lines the sn-glycerol 3-phosphate pocket. Residue threonine 352 participates in FAD binding.

As to quaternary structure, monomer. Requires FAD as cofactor.

It is found in the cytoplasm. Its subcellular location is the cell membrane. The catalysed reaction is sn-glycerol 3-phosphate + O2 = dihydroxyacetone phosphate + H2O2. Its pathway is polyol metabolism; glycerol degradation via glycerol kinase pathway; glycerone phosphate from sn-glycerol 3-phosphate (aerobic route): step 1/1. Functionally, catalyzes the oxidation of glycerol 3-phosphate to dihydroxyacetone phosphate (DHAP), with a reduction of O2 to H2O2. The formation of hydrogen peroxide by this enzyme is crucial for cytotoxic effects on host cells. Does not show any dehydrogenase activity with NAD(+). This is Glycerol 3-phosphate oxidase from Mycoplasma genitalium (strain ATCC 33530 / DSM 19775 / NCTC 10195 / G37) (Mycoplasmoides genitalium).